We begin with the raw amino-acid sequence, 150 residues long: Heavy metal-associated isoprenylated plant protein 24 (150 aa).

Residues 26–89 (QTVALRVARI…AAKSTKKKVE (64 aa)) form the HMA domain. The a metal cation site is built by cysteine 37 and cysteine 40. Residue cysteine 147 is modified to Cysteine methyl ester. The S-farnesyl cysteine moiety is linked to residue cysteine 147. Residues 148–150 (AIM) constitute a propeptide, removed in mature form.

This sequence belongs to the HIPP family. In terms of assembly, interacts with ZHD11/HB29.

Heavy-metal-binding protein. This is Heavy metal-associated isoprenylated plant protein 24 from Arabidopsis thaliana (Mouse-ear cress).